The sequence spans 865 residues: MNSNQLRETFLNYFKQLDHEVVPGSSLIPENDPTLLFTNAGMVQFKDVFLGVETRPYQRAVSIQPCMRAGGKHNDLENVGYTARHHTFFEMLGNFSFGDYFKRDAIKFAWDFLTNVLKLPPQRLWVTVFQDDFESESIWLKEMKINPERFSRCGEKDNFWQMRDTGPCGPCTEIFYDHGPTISGGPPGSAEADGDRYVEIWNLVFMQYNRDAKGNLLPLAKPSVDTGMGLERLTAVMQGVHDNYDIDLFQYLLKALRTLLKTEDLHNTSMRVIVDHIRSVAFLIADGVIPSNEGRGYVLRRIIRRAVRHGYKLGQEEPFFYQLTKPLLEEMGGAYPLLRKSQALIEQTIKQEEIQFSNTLTKGLKILDHEMAGLPSRQIPGNLIFQLYDTYGFPPDLTADIARERDFVMDYAGFDKAMERQREQSQQAHQFVANYAQKASIGGETQFVGYETLNSQANVISLLQNDQPINRLNESEKGVVVLDRTPFYAESGGQVGDQGFLYFEKGSFRVKDTKKQGDIYLHIGEMLQGHLNVKDKVRAEVDVSRFDIMRNHSATHLLHEALRRVLGERVMQKGSLVEAKRLRFDFSHAKPLTPEELQAVERLVNQQIQANLLSTIEVMTPEEAKKKGALALFGERYGKEVRVLEMGDFSTEICGGTHTERTGEIGLFKIVSESGCAAGIRRIEALTGKAALDYIESAEQQLRSLSDLLKTNRKNLAAKLSQILEDHRKLEKELAKLKQRLASQQLESLINQVVDVHDIRTLAIRLEAVDRETLRAIVDQLKQKLGKAAIVLATIEEGRIQLVAGVTKNCLEHFNATELLAPIAEKVGGRSGGRPDLAQGAGERPENLEAALAAVPKWIEKKLKE.

Residues H552, H556, C654, and H658 each coordinate Zn(2+).

This sequence belongs to the class-II aminoacyl-tRNA synthetase family. Zn(2+) serves as cofactor.

The protein localises to the cytoplasm. The catalysed reaction is tRNA(Ala) + L-alanine + ATP = L-alanyl-tRNA(Ala) + AMP + diphosphate. In terms of biological role, catalyzes the attachment of alanine to tRNA(Ala) in a two-step reaction: alanine is first activated by ATP to form Ala-AMP and then transferred to the acceptor end of tRNA(Ala). Also edits incorrectly charged Ser-tRNA(Ala) and Gly-tRNA(Ala) via its editing domain. In Coxiella burnetii (strain RSA 331 / Henzerling II), this protein is Alanine--tRNA ligase.